A 400-amino-acid polypeptide reads, in one-letter code: Protein phosphatase methylesterase 1 (400 aa).

Positions 32–70 (DENDGDALGSLPSFNGQSNRNRKYTGKTGSTTDRISSKE) are disordered. The AB hydrolase-1 domain occupies 114–365 (PIFIFHHGAG…DSGHFIQEDS (252 aa)). Residues serine 205, aspartate 233, and histidine 359 contribute to the active site.

It belongs to the AB hydrolase superfamily. In terms of assembly, interacts with and inactivates the phosphatase PP2A-like catalytic subunits PPG1, PPH21, PPH22, PPH3 and SIT4.

It carries out the reaction [phosphatase 2A protein]-C-terminal L-leucine methyl ester + H2O = [phosphatase 2A protein]-C-terminal L-leucine + methanol + H(+). In terms of biological role, demethylates proteins that have been reversibly carboxymethylated. Demethylates the phosphatase PP2A catalytic subunits PPH21 and PPH22. Forms inactive complexes (PP2Ai) with phosphatase PP2A-like catalytic subunits. Involved in the regulation of cell cycle progression at START. The sequence is that of Protein phosphatase methylesterase 1 (PPE1) from Saccharomyces cerevisiae (strain ATCC 204508 / S288c) (Baker's yeast).